The following is a 374-amino-acid chain: Conserved virulence factor C (374 aa).

Belongs to the CvfC family.

Its function is as follows. Required for hemolysin production. Contributes to virulence in both silkworm-infection model and mice. In Staphylococcus aureus (strain NCTC 8325 / PS 47), this protein is Conserved virulence factor C (cvfC).